The chain runs to 326 residues: Biotin synthase (326 aa).

Residues 40 to 264 form the Radical SAM core domain; that stretch reads GQVQACTLVS…VLPRSYVRLA (225 aa). [4Fe-4S] cluster-binding residues include Cys-55, Cys-59, and Cys-62. The [2Fe-2S] cluster site is built by Cys-99, Cys-130, Cys-190, and Arg-262.

It belongs to the radical SAM superfamily. Biotin synthase family. As to quaternary structure, homodimer. The cofactor is [4Fe-4S] cluster. [2Fe-2S] cluster serves as cofactor.

The catalysed reaction is (4R,5S)-dethiobiotin + (sulfur carrier)-SH + 2 reduced [2Fe-2S]-[ferredoxin] + 2 S-adenosyl-L-methionine = (sulfur carrier)-H + biotin + 2 5'-deoxyadenosine + 2 L-methionine + 2 oxidized [2Fe-2S]-[ferredoxin]. It functions in the pathway cofactor biosynthesis; biotin biosynthesis; biotin from 7,8-diaminononanoate: step 2/2. Catalyzes the conversion of dethiobiotin (DTB) to biotin by the insertion of a sulfur atom into dethiobiotin via a radical-based mechanism. The polypeptide is Biotin synthase (Halorhodospira halophila (strain DSM 244 / SL1) (Ectothiorhodospira halophila (strain DSM 244 / SL1))).